A 491-amino-acid polypeptide reads, in one-letter code: Nuatigenin 3-beta-glucosyltransferase (491 aa).

Histidine 20 functions as the Proton acceptor in the catalytic mechanism. Histidine 20 contacts an anthocyanidin. Aspartate 125 (charge relay) is an active-site residue. 7 residues coordinate UDP-alpha-D-glucose: alanine 352, glutamine 354, histidine 369, tryptophan 372, asparagine 373, serine 374, and glutamate 377. Alanine 392 provides a ligand contact to an anthocyanidin. UDP-alpha-D-glucose is bound by residues glutamate 393 and glutamine 394.

It belongs to the UDP-glycosyltransferase family. As to expression, expressed in roots, stems and leaves.

It carries out the reaction nuatigenin + UDP-alpha-D-glucose = nuatigenin 3-beta-D-glucopyranoside + UDP + H(+). The enzyme catalyses diosgenin + UDP-alpha-D-glucose = diosgenin 3-O-beta-D-glucoside + UDP + H(+). It catalyses the reaction tigogenin + UDP-alpha-D-glucose = tigogenin 3-O-beta-D-glucopyranoside + UDP + H(+). The catalysed reaction is solasodine + UDP-alpha-D-glucose = solasodine 3-beta-D-glucoside + UDP + H(+). It carries out the reaction solanidine + UDP-alpha-D-glucose = solanidine 3-O-beta-D-glucopyranoside + UDP + H(+). The enzyme catalyses tomatidine + UDP-alpha-D-glucose = tomatidine 3-O-beta-D-glucopyranoside + UDP + H(+). In terms of biological role, glucosyltransferase involved in steroid saponin biosynthesis. Catalyzes the 3-O-glucosylation of steroidal sapogenins, such as diosgenin, nuatigenin and tigogenin. Can glucosylate steroidal alkaloids, such as solanidine, solasodine and tomatidine. The sequence is that of Nuatigenin 3-beta-glucosyltransferase from Solanum aculeatissimum (Dutch eggplant).